A 255-amino-acid polypeptide reads, in one-letter code: GTP cyclohydrolase III (255 aa).

This sequence belongs to the archaeal-type GTP cyclohydrolase family.

The enzyme catalyses GTP + 3 H2O = 2-amino-5-formylamino-6-(5-phospho-D-ribosylamino)pyrimidin-4(3H)-one + 2 phosphate + 2 H(+). Its function is as follows. Catalyzes the formation of 2-amino-5-formylamino-6-ribofuranosylamino-4(3H)-pyrimidinone ribonucleotide monophosphate and inorganic phosphate from GTP. Also has an independent pyrophosphate phosphohydrolase activity. This Methanosphaera stadtmanae (strain ATCC 43021 / DSM 3091 / JCM 11832 / MCB-3) protein is GTP cyclohydrolase III.